The primary structure comprises 400 residues: Phosphoribosylamine--glycine ligase (400 aa).

Positions 99-303 (KRFMKKYGIR…FVNAVLEGYR (205 aa)) constitute an ATP-grasp domain. ATP is bound at residue 125 to 186 (IKKFSPPYVI…DEFLAGNELS (62 aa)). Residues glutamate 273 and asparagine 275 each contribute to the Mg(2+) site.

This sequence belongs to the GARS family. Requires Mg(2+) as cofactor. It depends on Mn(2+) as a cofactor.

It carries out the reaction 5-phospho-beta-D-ribosylamine + glycine + ATP = N(1)-(5-phospho-beta-D-ribosyl)glycinamide + ADP + phosphate + H(+). The protein operates within purine metabolism; IMP biosynthesis via de novo pathway; N(1)-(5-phospho-D-ribosyl)glycinamide from 5-phospho-alpha-D-ribose 1-diphosphate: step 2/2. In Thermotoga maritima (strain ATCC 43589 / DSM 3109 / JCM 10099 / NBRC 100826 / MSB8), this protein is Phosphoribosylamine--glycine ligase.